Reading from the N-terminus, the 438-residue chain is Trigger factor (438 aa).

The region spanning 160–245 is the PPIase FKBP-type domain; sequence DDKVTIDFVG…VKKIQQAELP (86 aa).

This sequence belongs to the FKBP-type PPIase family. Tig subfamily.

The protein localises to the cytoplasm. It catalyses the reaction [protein]-peptidylproline (omega=180) = [protein]-peptidylproline (omega=0). Involved in protein export. Acts as a chaperone by maintaining the newly synthesized protein in an open conformation. Functions as a peptidyl-prolyl cis-trans isomerase. The chain is Trigger factor from Francisella tularensis subsp. tularensis (strain FSC 198).